Consider the following 543-residue polypeptide: Small conductance calcium-activated potassium channel protein 1 (543 aa).

The interval 1-92 is disordered; that stretch reads MNSHSYNGSV…SGKPSNVGHR (92 aa). The segment covering 65–76 has biased composition (acidic residues); the sequence is DQDDDEDDEEDE. Residues 111-131 form a helical membrane-spanning segment; it reads LIFGMFGIVVMVTETELSWGV. The helical transmembrane segment at 140–160 threads the bilayer; the sequence is FALKCLISLSTAILLGLVVLY. Residues 179–199 traverse the membrane as a helical segment; sequence IAMTCERVFLISLELAVCAIH. A helical transmembrane segment spans residues 228–248; the sequence is VLLSIPMFLRLYLLGRVMLLH. The helical transmembrane segment at 277–297 threads the bilayer; sequence LMTICPGTVLLVFSISSWIIA. The pore-forming intramembrane region spans 317 to 337; that stretch reads FLGAMWLISITFLSIGYGDMV. Residues 346–366 traverse the membrane as a helical segment; that stretch reads VCLLTGIMGAGCTALVVAVVA. The calmodulin-binding stretch occupies residues 384 to 463; the sequence is DTQLTKRVKN…LTDLAKTQTV (80 aa). A disordered region spans residues 505–543; it reads QAIRPPPPPLPPRPGPGPQDQAARSSPCRWTPVAPSDCG. Over residues 508-521 the composition is skewed to pro residues; that stretch reads RPPPPPLPPRPGPG.

Belongs to the potassium channel KCNN family. KCa2.1/KCNN1 subfamily. In terms of assembly, homodimer. Heteromultimer with KCNN2 and KCNN3. The complex is composed of 4 channel subunits each of which binds to a calmodulin subunit which regulates the channel activity through calcium-binding. Interacts with calmodulin.

It localises to the membrane. Its subcellular location is the cytoplasm. It is found in the myofibril. The protein resides in the sarcomere. The protein localises to the z line. The enzyme catalyses K(+)(in) = K(+)(out). With respect to regulation, inhibited by bee venom neurotoxin apamin. Inhibited by d-tubocurarine and tetraethylammonium (TEA). Small conductance calcium-activated potassium channel that mediates the voltage-independent transmembrane transfer of potassium across the cell membrane through a constitutive interaction with calmodulin which binds the intracellular calcium allowing its opening. The current is characterized by a voltage-independent activation, an intracellular calcium concentration increase-dependent activation and a single-channel conductance of about 3 picosiemens. Also presents an inwardly rectifying current, thus reducing its already small outward conductance of potassium ions, which is particularly the case when the membrane potential displays positive values, above + 20 mV. Activation is followed by membrane hyperpolarization. Thought to regulate neuronal excitability by contributing to the slow component of synaptic afterhyperpolarization. In Homo sapiens (Human), this protein is Small conductance calcium-activated potassium channel protein 1.